Here is a 497-residue protein sequence, read N- to C-terminus: Cytosol aminopeptidase (497 aa).

Mn(2+)-binding residues include lysine 267 and aspartate 272. Residue lysine 279 is part of the active site. Residues aspartate 290, aspartate 349, and glutamate 351 each coordinate Mn(2+). Residue arginine 353 is part of the active site.

It belongs to the peptidase M17 family. It depends on Mn(2+) as a cofactor.

Its subcellular location is the cytoplasm. It catalyses the reaction Release of an N-terminal amino acid, Xaa-|-Yaa-, in which Xaa is preferably Leu, but may be other amino acids including Pro although not Arg or Lys, and Yaa may be Pro. Amino acid amides and methyl esters are also readily hydrolyzed, but rates on arylamides are exceedingly low.. The enzyme catalyses Release of an N-terminal amino acid, preferentially leucine, but not glutamic or aspartic acids.. Presumably involved in the processing and regular turnover of intracellular proteins. Catalyzes the removal of unsubstituted N-terminal amino acids from various peptides. The sequence is that of Cytosol aminopeptidase (pepA) from Pseudomonas putida (Arthrobacter siderocapsulatus).